The sequence spans 379 residues: Bifunctional enzyme IspD/IspF (379 aa).

The tract at residues 1 to 223 is 2-C-methyl-D-erythritol 4-phosphate cytidylyltransferase; the sequence is MTVAVIIVAA…RERKGLTMDV (223 aa). Residues 224-379 are 2-C-methyl-D-erythritol 2,4-cyclodiphosphate synthase; the sequence is RLGNGYDVHA…SIATVTLIGA (156 aa). Residues Asp230 and His232 each coordinate a divalent metal cation. Residues 230 to 232 and 256 to 257 each bind 4-CDP-2-C-methyl-D-erythritol 2-phosphate; these read DVH and HS. His264 provides a ligand contact to a divalent metal cation. 4-CDP-2-C-methyl-D-erythritol 2-phosphate is bound by residues 278 to 280, 354 to 357, Phe361, and Arg364; these read DIG and TTSE.

This sequence in the N-terminal section; belongs to the IspD/TarI cytidylyltransferase family. IspD subfamily. It in the C-terminal section; belongs to the IspF family. A divalent metal cation serves as cofactor.

The enzyme catalyses 2-C-methyl-D-erythritol 4-phosphate + CTP + H(+) = 4-CDP-2-C-methyl-D-erythritol + diphosphate. The catalysed reaction is 4-CDP-2-C-methyl-D-erythritol 2-phosphate = 2-C-methyl-D-erythritol 2,4-cyclic diphosphate + CMP. It functions in the pathway isoprenoid biosynthesis; isopentenyl diphosphate biosynthesis via DXP pathway; isopentenyl diphosphate from 1-deoxy-D-xylulose 5-phosphate: step 2/6. It participates in isoprenoid biosynthesis; isopentenyl diphosphate biosynthesis via DXP pathway; isopentenyl diphosphate from 1-deoxy-D-xylulose 5-phosphate: step 4/6. In terms of biological role, bifunctional enzyme that catalyzes the formation of 4-diphosphocytidyl-2-C-methyl-D-erythritol from CTP and 2-C-methyl-D-erythritol 4-phosphate (MEP) (IspD), and catalyzes the conversion of 4-diphosphocytidyl-2-C-methyl-D-erythritol 2-phosphate (CDP-ME2P) to 2-C-methyl-D-erythritol 2,4-cyclodiphosphate (ME-CPP) with a corresponding release of cytidine 5-monophosphate (CMP) (IspF). In Rhodobacter capsulatus (strain ATCC BAA-309 / NBRC 16581 / SB1003), this protein is Bifunctional enzyme IspD/IspF.